A 370-amino-acid chain; its full sequence is Phospho-N-acetylmuramoyl-pentapeptide-transferase (370 aa).

Transmembrane regions (helical) follow at residues 3 to 23 (QIIIAGAVSFLVAIFTTPVLI), 54 to 74 (GLAILAGILVAYVVAGLYGLL), 79 to 99 (AFTASGLLVLGLTLGLGAVGF), 118 to 138 (AKLISQLVLALLFGFLVLRFP), 161 to 181 (LAVGGTVIGTIVFLIFMYILI), 197 to 217 (LAAGVTAIVMGSYSLMTFWQF), 238 to 258 (LAVLAAAGLGGCLGFLWWNAA), 262 to 282 (IFMGDTGSLALGGLVAGISVT), 290 to 310 (IIIGALFVIETVSVVIQIVVF), and 341 to 361 (FWLLAAMAAMAGVAIFYGDWL).

The protein belongs to the glycosyltransferase 4 family. MraY subfamily. Mg(2+) serves as cofactor.

The protein localises to the cell membrane. It catalyses the reaction UDP-N-acetyl-alpha-D-muramoyl-L-alanyl-gamma-D-glutamyl-meso-2,6-diaminopimeloyl-D-alanyl-D-alanine + di-trans,octa-cis-undecaprenyl phosphate = di-trans,octa-cis-undecaprenyl diphospho-N-acetyl-alpha-D-muramoyl-L-alanyl-D-glutamyl-meso-2,6-diaminopimeloyl-D-alanyl-D-alanine + UMP. It functions in the pathway cell wall biogenesis; peptidoglycan biosynthesis. In terms of biological role, catalyzes the initial step of the lipid cycle reactions in the biosynthesis of the cell wall peptidoglycan: transfers peptidoglycan precursor phospho-MurNAc-pentapeptide from UDP-MurNAc-pentapeptide onto the lipid carrier undecaprenyl phosphate, yielding undecaprenyl-pyrophosphoryl-MurNAc-pentapeptide, known as lipid I. The protein is Phospho-N-acetylmuramoyl-pentapeptide-transferase of Corynebacterium aurimucosum (strain ATCC 700975 / DSM 44827 / CIP 107346 / CN-1) (Corynebacterium nigricans).